We begin with the raw amino-acid sequence, 113 residues long: Large ribosomal subunit protein eL31 (113 aa).

The protein belongs to the eukaryotic ribosomal protein eL31 family. Component of the large ribosomal subunit (LSU). Mature yeast ribosomes consist of a small (40S) and a large (60S) subunit. The 40S small subunit contains 1 molecule of ribosomal RNA (18S rRNA) and at least 33 different proteins. The large 60S subunit contains 3 rRNA molecules (25S, 5.8S and 5S rRNA) and at least 46 different proteins.

It is found in the cytoplasm. Component of the ribosome, a large ribonucleoprotein complex responsible for the synthesis of proteins in the cell. The small ribosomal subunit (SSU) binds messenger RNAs (mRNAs) and translates the encoded message by selecting cognate aminoacyl-transfer RNA (tRNA) molecules. The large subunit (LSU) contains the ribosomal catalytic site termed the peptidyl transferase center (PTC), which catalyzes the formation of peptide bonds, thereby polymerizing the amino acids delivered by tRNAs into a polypeptide chain. The nascent polypeptides leave the ribosome through a tunnel in the LSU and interact with protein factors that function in enzymatic processing, targeting, and the membrane insertion of nascent chains at the exit of the ribosomal tunnel. In Schizosaccharomyces pombe (strain 972 / ATCC 24843) (Fission yeast), this protein is Large ribosomal subunit protein eL31 (rpl31).